A 192-amino-acid polypeptide reads, in one-letter code: Protein GrpE (192 aa).

A disordered region spans residues 1–43 (MSKEEFPHEKDLKDEVTPDKAPKKDPKAASKEEVKEDPAKDYE).

This sequence belongs to the GrpE family. Homodimer.

It localises to the cytoplasm. Functionally, participates actively in the response to hyperosmotic and heat shock by preventing the aggregation of stress-denatured proteins, in association with DnaK and GrpE. It is the nucleotide exchange factor for DnaK and may function as a thermosensor. Unfolded proteins bind initially to DnaJ; upon interaction with the DnaJ-bound protein, DnaK hydrolyzes its bound ATP, resulting in the formation of a stable complex. GrpE releases ADP from DnaK; ATP binding to DnaK triggers the release of the substrate protein, thus completing the reaction cycle. Several rounds of ATP-dependent interactions between DnaJ, DnaK and GrpE are required for fully efficient folding. This is Protein GrpE from Lactobacillus gasseri (strain ATCC 33323 / DSM 20243 / BCRC 14619 / CIP 102991 / JCM 1131 / KCTC 3163 / NCIMB 11718 / NCTC 13722 / AM63).